Reading from the N-terminus, the 1499-residue chain is LNVNLMLGQAQECLLEKSMLDNRKSFLVARISAQVVDYYKEACRALENPDTASLLGRIQKDWKKLVQMKIYYFAAVAHLHMGKQAEEQQKFGERVAYFQSALDKLNEAIKLAKGQPDTVQDALRFAMDVIGGKYNSAKKDNDFIYHEAVPALDTLQPVKGAPLVKPLPVNPTDPAVTGPDIFAKLVPMAAHEASSLYSEEKAKLLREMLAKIEDKNEVLDQFMDSMQLDPDTVDNLDAYNHIPPQLMEKCAALSVRPDTVKNLVQSMQVLSGVFTDVEASLKDIRDLLEEDELQEQKLQETLGQAGAGPGPSVTKAELGEVRREWAKYTEVHEKASFTNSELHRAMNLHVGNLRLLSGPLDQVRAALPTPALTPEDKAVLQNLKRILAKVQEMRDQRVSLEQQLRELIQKDDITASLVTTDHSEMKKLFEEQLKKYDQLKVYLEQNLAAQDNVLRALTEANVQYAAVRRVLSELDQKWNSTLQTLVASYEAYEDLMKKSQEGKDFYADLESKVAALLERAQSLCRAQEAARQQLLDRELKKKAPPPRPTAPKPLLSRREEGEAAEAGDQPEELRSLPPDMMAGPRLPDPFLGTAAPLHFSPGPFPGSTGPATHYLSGPLPPGTYSGPTQLMQPRAAVPMAPGPVLYPAPVYTSELGLVPRSSPQHGIVSSPYAGVGPPQPIVGLPSAPPPQFSGPELAMDVRPATTTVDSVQAPISSHMALRPGPAPAPPQPCFPVPQPVPQSVPQPQPLPTPYTYSIGTKQHLTGPLPQHHFPPGIPTSFPAPRIGPQPPPQLQPQPQPQPQPQPPPQPQPQPQPQPQPQPQPQPQRPVFGPQPTQQPLPFQHPHLFPSQAPGILTPPPPYPFTPQPGVLGQPPPTRHTQLYPGPPPDTLPPHSGALPFPSPGPPHPHPTLAYGPAPSPRPLGPQATPVSIRGPPPANQPAPSPHLVPSPAPSPGPGPVPSRPPTAEPPPCLRRGAAAADLLSSSPESQHGGTQPPGGGQPLLQPTKVDAAERPTAQALRLIEQDPYEHPERLQKLQQELESFRGQLGDAGALDAVWRELQEAQEHDARGRSIAIARCYSLKNRHQDVMPYDSNRVVLRSGKDDYINASCVEGLSPYCPPLVATQRPLPGTAADFWLMVHEQKVSVIVMLVSEAEMEKQKVARYFPIERGQPMVHGALSVALSSVRTTDTHVERVLSLQFRDQSLKRSLVHLHFPTWPELGLPDSPGNLLRFIQEVHAHYLHQRPLHTPIVVHCSSGVGRTGAFALLYAAVQEVEAGSRIPELPQLVRRMRQQRKHMLQEKLHLKFCHEALVRHVEQVLQRHGVPPPGKPVASMSVSQKSHLPQDSQDLVLGGDVPISSIQATIAKLSIRPLGGLDSPAASLPSLVEPPGLPPASLPEPTPAPPSSPPPPSSPLPEPPQPEEEPSVPEAPSLGPPSSSLELLASLTPEAFSLDSSLRGKQRMSKQNFLQAHNGQGLRAAQPTDDPLSLLDPLWTLNKT.

Positions 1–219 constitute a BRO1 domain; that stretch reads LNVNLMLGQA…AKIEDKNEVL (219 aa). 2 TPR repeats span residues 75–108 and 199–232; these read AVAH…LNEA and EEKA…DPDT. Coiled coils occupy residues 278 to 305, 377 to 464, and 506 to 537; these read EASL…LGQA, KAVL…NVQY, and YADL…LLDR. 2 disordered regions span residues 536-583 and 718-1006; these read DREL…MMAG and HMAL…LLQP. Positions 598-993 are his; sequence HFSPGPFPGS…SSSPESQHGG (396 aa). A compositionally biased stretch (pro residues) spans 724–752; that stretch reads GPAPAPPQPCFPVPQPVPQSVPQPQPLPT. Over residues 754–763 the composition is skewed to polar residues; sequence YTYSIGTKQH. Arg-785 bears the Omega-N-methylarginine mark. 4 stretches are compositionally biased toward pro residues: residues 785–827, 856–866, 900–909, and 934–972; these read RIGP…PQPQ, LTPPPPYPFTP, FPSPGPPHPH, and GPPP…PPPC. Tandem repeats lie at residues 788-789, 790-791, 792-793, 794-795, 796-797, 798-799, 800-801, 802-803, 804-805, 806-807, 808-809, 810-811, 812-813, 814-815, 816-817, 818-819, 820-821, 822-823, 824-825, and 826-827. The interval 788–827 is 20 X 2 AA approximate tandem repeats of P-Q; it reads PQPPPQLQPQPQPQPQPQPPPQPQPQPQPQPQPQPQPQPQ. 2 positions are modified to phosphoserine: Ser-985 and Ser-986. Position 994 is a phosphothreonine (Thr-994). Residues 1055–1315 form the Tyrosine-protein phosphatase domain; sequence DAVWRELQEA…KFCHEALVRH (261 aa). Cys-1255 (phosphocysteine intermediate) is an active-site residue. Disordered regions lie at residues 1322 to 1351 and 1381 to 1499; these read RHGV…QDLV and ASLP…LNKT. Positions 1335 to 1348 are enriched in polar residues; that stretch reads MSVSQKSHLPQDSQ. Positions 1390–1419 are enriched in pro residues; sequence PGLPPASLPEPTPAPPSSPPPPSSPLPEPP. The segment covering 1427-1450 has biased composition (low complexity); it reads VPEAPSLGPPSSSLELLASLTPEA. The span at 1464 to 1473 shows a compositional bias: polar residues; sequence SKQNFLQAHN. Arg-1478 bears the Omega-N-methylarginine mark. Positions 1482–1499 are enriched in low complexity; the sequence is PTDDPLSLLDPLWTLNKT.

The protein belongs to the protein-tyrosine phosphatase family. Non-receptor class subfamily. Interacts with GRAP2 and GRB2. Interacts with UBAP1 and CHMP4B. As to expression, ubiquitously expressed, with highest levels in brain, testis and kidney, and lowest levels in skeletal muscle.

The protein resides in the nucleus. Its subcellular location is the cytoplasm. It is found in the cytoplasmic vesicle. The protein localises to the endosome. It localises to the cytoskeleton. The protein resides in the cilium basal body. The catalysed reaction is O-phospho-L-tyrosyl-[protein] + H2O = L-tyrosyl-[protein] + phosphate. In terms of biological role, plays a role in sorting of endocytic ubiquitinated cargos into multivesicular bodies (MVBs) via its interaction with the ESCRT-I complex (endosomal sorting complex required for transport I), and possibly also other ESCRT complexes. May act as a negative regulator of Ras-mediated mitogenic activity. Plays a role in ciliogenesis. The polypeptide is Tyrosine-protein phosphatase non-receptor type 23 (Ptpn23) (Rattus norvegicus (Rat)).